Reading from the N-terminus, the 179-residue chain is Replication restart protein DnaT (179 aa).

Residues 156–179 (GGLPKRDVNTVSEPDSQIPPGFRG) are disordered.

This sequence belongs to the DnaT family. As to quaternary structure, homooligomerizes. Interacts with PriB. Component of the replication restart primosome. Primosome assembly occurs via a 'hand-off' mechanism. PriA binds to replication forks, subsequently PriB then DnaT bind; DnaT then displaces ssDNA to generate the helicase loading substrate.

Its function is as follows. Involved in the restart of stalled replication forks, which reloads the replicative helicase on sites other than the origin of replication. Can function in multiple replication restart pathways. Displaces ssDNA from a PriB-ssDNA complex. Probably forms a spiral filament on ssDNA. This is Replication restart protein DnaT from Escherichia coli (strain ATCC 8739 / DSM 1576 / NBRC 3972 / NCIMB 8545 / WDCM 00012 / Crooks).